The primary structure comprises 853 residues: Aryl hydrocarbon receptor (853 aa).

The propeptide occupies 1–9; that stretch reads MSSGANITY. The tract at residues 1-38 is disordered; it reads MSSGANITYASRKRRKPVQKTVKPVPAEGIKSNPSKRH. Short sequence motifs (nuclear localization signal) lie at residues 12-15 and 36-41; these read RKRR and KRHRDR. Positions 26 to 79 constitute a bHLH domain; sequence PAEGIKSNPSKRHRDRLNTELDRLASLLPFPQDVINKLDKLSVLRLSVSYLRAK. The segment at 37-65 is DNA-binding; it reads RHRDRLNTELDRLASLLPFPQDVINKLDK. Required for maintaining the overall integrity of the AHR:ARNT heterodimer and its transcriptional activity stretches follow at residues 49 to 81, 116 to 124, and 264 to 266; these read LASL…AKSF, LLQALNGFV, and FAI. A Nuclear export signal motif is present at residues 63–71; that stretch reads LDKLSVLRL. One can recognise a PAS 1 domain in the interval 116-179; the sequence is LLQALNGFVL…RQLHWALNPS (64 aa). A PAS 2 domain is found at 273–340; the sequence is PSILEIRTKN…CAESHIRMIK (68 aa). One can recognise a PAC domain in the interval 346 to 384; the sequence is MTVFRLLAKHSRWRWVQSNARLIYRNGRPDYIIATQRPL. Residues 429 to 451 form a disordered region; that stretch reads TKSNTSRKDWAPQSTPSKDSFHP. Polar residues predominate over residues 440–451; that stretch reads PQSTPSKDSFHP.

As to quaternary structure, homodimer. Heterodimer; efficient DNA binding requires dimerization with another bHLH protein. Interacts with ARNT; the heterodimer ARNT:AHR binds to core DNA sequence 5'-TGCGTG-3' within the dioxin response element (DRE) of target gene promoters and activates their transcription. Binds MYBBP1A. Interacts with coactivators including SRC-1, RIP140 and NOCA7, and with the corepressor SMRT. Interacts with NEDD8 and IVNS1ABP. Interacts with BMAL1. Interacts with HSP90AB1. Interacts with TIPARP; leading to mono-ADP-ribosylation of AHR and subsequent inhibition of AHR. Mono-ADP-ribosylated, leading to inhibit transcription activator activity of AHR. In terms of tissue distribution, expressed in all tissues tested including brain, heart, kidney, liver, lung, spleen, skeletal muscle and thymus.

It is found in the cytoplasm. The protein localises to the nucleus. Functionally, ligand-activated transcription factor that enables cells to adapt to changing conditions by sensing compounds from the environment, diet, microbiome and cellular metabolism, and which plays important roles in development, immunity and cancer. Upon ligand binding, translocates into the nucleus, where it heterodimerizes with ARNT and induces transcription by binding to xenobiotic response elements (XRE). Regulates a variety of biological processes, including angiogenesis, hematopoiesis, drug and lipid metabolism, cell motility and immune modulation. Xenobiotics can act as ligands: upon xenobiotic-binding, activates the expression of multiple phase I and II xenobiotic chemical metabolizing enzyme genes (such as the CYP1A1 gene). Mediates biochemical and toxic effects of halogenated aromatic hydrocarbons. Next to xenobiotics, natural ligands derived from plants, microbiota, and endogenous metabolism are potent AHR agonists. Tryptophan (Trp) derivatives constitute an important class of endogenous AHR ligands. Acts as a negative regulator of anti-tumor immunity: indoles and kynurenic acid generated by Trp catabolism act as ligand and activate AHR, thereby promoting AHR-driven cancer cell motility and suppressing adaptive immunity. Regulates the circadian clock by inhibiting the basal and circadian expression of the core circadian component PER1. Inhibits PER1 by repressing the CLOCK-BMAL1 heterodimer mediated transcriptional activation of PER1. The heterodimer ARNT:AHR binds to core DNA sequence 5'-TGCGTG-3' within the dioxin response element (DRE) of target gene promoters and activates their transcription. This Rattus norvegicus (Rat) protein is Aryl hydrocarbon receptor (Ahr).